Consider the following 178-residue polypeptide: MKMDADSSCGADHRDSHGSRSRSRREREQHGRTSNRDSKKKEHKVPYFADEVREQDRVRRLRKRSPRSTRRSASRSQSSDRRHRHRSRSRNRSRSRSSERRRRQRSPRRYNPPPKIINYYLQVPPQDFYGMSGMQQRFGYQRLPHPPPFPPAPYRFRQRPPFLGAPRFGYRNAWRPPY.

Composition is skewed to basic and acidic residues over residues 1-18 (MKMD…DSHG) and 25-40 (RERE…DSKK). The segment at 1–117 (MKMDADSSCG…RRYNPPPKII (117 aa)) is disordered. Composition is skewed to basic residues over residues 59 to 73 (RRLR…RRSA) and 81 to 108 (RRHR…RSPR).

It is found in the nucleus speckle. Member of the regulatory pathway controlling female somatic sexual differentiation, regulated by Sxl. Activates dsx female-specific splicing by promoting the formation of a splicing enhancer complex which consists of tra, tra2 and sr proteins. This chain is Female-specific protein transformer (tra), found in Drosophila erecta (Fruit fly).